Reading from the N-terminus, the 183-residue chain is Capsid protein (183 aa).

The interval 136-183 is disordered; that stretch reads NAPILSTLPETTVVRRRGRSPRRRTPSPRRRRSQSPRRRRTQSRESQC. Residues 149 to 176 show a composition bias toward basic residues; the sequence is VRRRGRSPRRRTPSPRRRRSQSPRRRRT. Phosphoserine; by host occurs at positions 155, 162, and 170. The stretch at 155 to 161 is one 1; half-length repeat; the sequence is SPRRRTP. The segment at 155 to 177 is 3 X 8 AA repeats of S-P-R-R-R-[PR]-[ST]-Q; it reads SPRRRTPSPRRRRSQSPRRRRTQ. Residues 158 to 175 carry the Bipartite nuclear localization signal motif; it reads RRTPSPRRRRSQSPRRRR. 2 repeat units span residues 162–169 and 170–177. The segment at 177–183 is RNA binding; sequence QSRESQC.

It belongs to the orthohepadnavirus core antigen family. As to quaternary structure, homodimerizes, then multimerizes. Interacts with cytosol exposed regions of viral L glycoprotein present in the reticulum-to-Golgi compartment. Interacts with human FLNB. Phosphorylated form interacts with host importin alpha; this interaction depends on the exposure of the NLS, which itself depends upon genome maturation and/or phosphorylation of the capsid protein. Interacts with host NUP153. Phosphorylated by host SRPK1, SRPK2, and maybe protein kinase C or GAPDH. Phosphorylation is critical for pregenomic RNA packaging. Protein kinase C phosphorylation is stimulated by HBx protein and may play a role in transport of the viral genome to the nucleus at the late step during the viral replication cycle.

Its subcellular location is the virion. The protein resides in the host cytoplasm. Self assembles to form an icosahedral capsid. Most capsids appear to be large particles with an icosahedral symmetry of T=4 and consist of 240 copies of capsid protein, though a fraction forms smaller T=3 particles consisting of 180 capsid proteins. Entering capsids are transported along microtubules to the nucleus. Phosphorylation of the capsid is thought to induce exposure of nuclear localization signal in the C-terminal portion of the capsid protein that allows binding to the nuclear pore complex via the importin (karyopherin-) alpha and beta. Capsids are imported in intact form through the nuclear pore into the nuclear basket, where it probably binds NUP153. Only capsids that contain the mature viral genome can release the viral DNA and capsid protein into the nucleoplasm. Immature capsids get stuck in the basket. Capsids encapsulate the pre-genomic RNA and the P protein. Pre-genomic RNA is reverse-transcribed into DNA while the capsid is still in the cytoplasm. The capsid can then either be directed to the nucleus, providing more genomes for transcription, or bud through the endoplasmic reticulum to provide new virions. This is Capsid protein from Hepatitis B virus genotype D (isolate France/alpha1/1989) (HBV-D).